Here is a 490-residue protein sequence, read N- to C-terminus: Glycogen synthase kinase-3 alpha (490 aa).

Over residues 1–15 (MSGGGPSGGGPGGSG) the composition is skewed to gly residues. A disordered region spans residues 1-97 (MSGGGPSGGG…PPGVKLGRDS (97 aa)). Residue Ser-2 is modified to N-acetylserine. Ser-2 carries the post-translational modification Phosphoserine. Position 21 is a phosphoserine; by PKB/AKT1 (Ser-21). Residues 25–82 (PGGGGGGGGGGPGGSASGPGGTGGGKASVGAMGGGVGASSSGGGPSGSGGGGSGGPGA) show a composition bias toward gly residues. A phosphoserine mark is found at Ser-72, Ser-77, and Ser-97. A Protein kinase domain is found at 119 to 404 (YTDIKVIGNG…PLEACAHSFF (286 aa)). ATP-binding positions include 125–133 (IGNGSFGVV) and Lys-148. Asp-244 functions as the Proton acceptor in the catalytic mechanism. Tyr-279 carries the post-translational modification Phosphotyrosine. The disordered stretch occupies residues 451–490 (GPASPLTTSYNPSSQALTEAQTGQDWQPSDATTATLASSS). The segment covering 455 to 480 (PLTTSYNPSSQALTEAQTGQDWQPSD) has biased composition (polar residues). Over residues 481–490 (ATTATLASSS) the composition is skewed to low complexity.

It belongs to the protein kinase superfamily. CMGC Ser/Thr protein kinase family. GSK-3 subfamily. Monomer. Interacts with AXIN1 and CTNNB1/beta-catenin. Interacts with ARRB2. Interacts with CTNND2. Interacts with LMBR1L. Interacts with DDX3X. Interacts with TNFRSF10B. Post-translationally, phosphorylated by AKT1 at Ser-21: upon insulin-mediated signaling, the activated PKB/AKT1 protein kinase phosphorylates and deactivates GSK3A, resulting in the dephosphorylation and activation of GYS1. Activated by phosphorylation at Tyr-279.

It carries out the reaction L-seryl-[tau protein] + ATP = O-phospho-L-seryl-[tau protein] + ADP + H(+). The enzyme catalyses L-threonyl-[tau protein] + ATP = O-phospho-L-threonyl-[tau protein] + ADP + H(+). The catalysed reaction is L-seryl-[protein] + ATP = O-phospho-L-seryl-[protein] + ADP + H(+). It catalyses the reaction L-threonyl-[protein] + ATP = O-phospho-L-threonyl-[protein] + ADP + H(+). Activated by phosphorylation at Tyr-279. In response to insulin, inhibited by phosphorylation at Ser-21 by PKB/AKT1; phosphorylation at this site causes a conformational change, preventing access of substrates to the active site. Inhibited by lithium. Constitutively active protein kinase that acts as a negative regulator in the hormonal control of glucose homeostasis, Wnt signaling and regulation of transcription factors and microtubules, by phosphorylating and inactivating glycogen synthase (GYS1 or GYS2), CTNNB1/beta-catenin, APC and AXIN1. Requires primed phosphorylation of the majority of its substrates. Contributes to insulin regulation of glycogen synthesis by phosphorylating and inhibiting GYS1 activity and hence glycogen synthesis. Regulates glycogen metabolism in liver, but not in muscle. May also mediate the development of insulin resistance by regulating activation of transcription factors. In Wnt signaling, regulates the level and transcriptional activity of nuclear CTNNB1/beta-catenin. Facilitates amyloid precursor protein (APP) processing and the generation of APP-derived amyloid plaques found in Alzheimer disease. May be involved in the regulation of replication in pancreatic beta-cells. Is necessary for the establishment of neuronal polarity and axon outgrowth. Through phosphorylation of the anti-apoptotic protein MCL1, may control cell apoptosis in response to growth factors deprivation. Acts as a regulator of autophagy by mediating phosphorylation of KAT5/TIP60 under starvation conditions, activating KAT5/TIP60 acetyltransferase activity and promoting acetylation of key autophagy regulators, such as ULK1 and RUBCNL/Pacer. Negatively regulates extrinsic apoptotic signaling pathway via death domain receptors. Promotes the formation of an anti-apoptotic complex, made of DDX3X, BRIC2 and GSK3B, at death receptors, including TNFRSF10B. The anti-apoptotic function is most effective with weak apoptotic signals and can be overcome by stronger stimulation. This Mus musculus (Mouse) protein is Glycogen synthase kinase-3 alpha (Gsk3a).